A 743-amino-acid chain; its full sequence is GTPase-activating protein gyp7 (743 aa).

One can recognise a Rab-GAP TBC domain in the interval 411–633; the sequence is GIQPSLRKEV…KLWDVLFTNY (223 aa).

It localises to the cytoplasm. Its subcellular location is the nucleus. In terms of biological role, most effectively accelerates the intrinsic GTPase activity of ypt7. This Schizosaccharomyces pombe (strain 972 / ATCC 24843) (Fission yeast) protein is GTPase-activating protein gyp7.